A 167-amino-acid chain; its full sequence is Signal peptidase complex catalytic subunit SEC11 (167 aa).

The Cytoplasmic segment spans residues 1 to 6; the sequence is MNIRQQ. Residues 7–24 form a helical; Signal-anchor for type II membrane protein membrane-spanning segment; sequence LTKFLGLFLTLASAFMFW. The Lumenal segment spans residues 25–167; that stretch reads KGLSVVTNSH…LALSSLLGSE (143 aa). Residues Ser-44, His-83, and Asp-109 each act as charge relay system in the active site. Positions 153–164 are C-terminal short (CTS) helix; the sequence is ALMGMLALSSLL.

Belongs to the peptidase S26B family. Component of the signal peptidase complex (SPC) composed of a catalytic subunit SEC11 and three accessory subunits SPC1, SPC2 and SPC3. The complex induces a local thinning of the ER membrane which is used to measure the length of the signal peptide (SP) h-region of protein substrates. This ensures the selectivity of the complex towards h-regions shorter than 18-20 amino acids. SPC associates with the translocon complex.

The protein resides in the endoplasmic reticulum membrane. The enzyme catalyses Cleavage of hydrophobic, N-terminal signal or leader sequences from secreted and periplasmic proteins.. In terms of biological role, catalytic component of the signal peptidase complex (SPC) which catalyzes the cleavage of N-terminal signal sequences from nascent proteins as they are translocated into the lumen of the endoplasmic reticulum. Specifically cleaves N-terminal signal peptides that contain a hydrophobic alpha-helix (h-region) shorter than 18-20 amino acids. The protein is Signal peptidase complex catalytic subunit SEC11 (SEC11) of Eremothecium gossypii (strain ATCC 10895 / CBS 109.51 / FGSC 9923 / NRRL Y-1056) (Yeast).